Reading from the N-terminus, the 66-residue chain is Conotoxin Cl14.1b (66 aa).

The first 19 residues, 1–19 (MNVTVMFLVLLLTMPLTDG), serve as a signal peptide directing secretion. The propeptide occupies 20–47 (FNIRAINGGELFGLVQRDAGNALDHGFY).

The protein belongs to the conotoxin L superfamily. Contains 2 disulfide bonds. In terms of tissue distribution, expressed by the venom duct.

The protein resides in the secreted. In Californiconus californicus (California cone), this protein is Conotoxin Cl14.1b.